A 346-amino-acid chain; its full sequence is HLA class I histocompatibility antigen, alpha chain F (346 aa).

An N-terminal signal peptide occupies residues 1 to 21; it reads MAPRSLLLLLSGALALTDTWA. The interval 22–111 is alpha-1; that stretch reads GSHSLRYFST…LLRRYNQSEA (90 aa). The Extracellular segment spans residues 22 to 305; that stretch reads GSHSLRYFST…EQSPQPTIPI (284 aa). Positions 91 and 105 each coordinate a peptide antigen. N-linked (GlcNAc...) asparagine glycosylation occurs at N107. The tract at residues 112-203 is alpha-2; the sequence is GSHTLQGMNG…ENGKETLQRA (92 aa). Intrachain disulfides connect C122/C185 and C224/C280. Positions 164, 168, and 176 each coordinate a peptide antigen. An alpha-3 region spans residues 204-295; it reads DPPKAHVAHH…GLPQPLILRW (92 aa). Residues 206–296 form the Ig-like C1-type domain; the sequence is PKAHVAHHPI…LPQPLILRWE (91 aa). Positions 296–305 are connecting peptide; that stretch reads EQSPQPTIPI. The chain crosses the membrane as a helical span at residues 306-329; it reads VGIVAGLVVLGAVVTGAVVAAVMW. The Cytoplasmic portion of the chain corresponds to 330–346; that stretch reads RKKSSDRNRGSYSQAAV. Positions 336–338 match the Sorting signal sequence; Golgi-retention signal; ER-retention signal motif; the sequence is RNR.

This sequence belongs to the MHC class I family. As to quaternary structure, forms a heterotrimer with B2M and a self-peptide. Binds a diverse number of peptides ranging from 7 to more than 30 amino acids. Peptide-bound HLA-F-B2M interacts with LILRB1 and LILRB2 but not with KIR3DS1 or KIR3DL2; this interaction is direct. The OC form interacts with KIR3DS1, KIR2DS4 and KIR3DL2; this interaction is direct. Interacts with TAP1-TAP2 complex and CALR; this interaction is required for appropriate folding and peptide loading. Interacts with the coat protein complex II and 14-3-3 proteins; these interactions likely control the anterograde ER-to-Golgi transport of HLA-F. HLA-F-B2M complex interacts with the heavy chain of other MHC class I molecules including HLA-A and HLA-E; this interaction may regulate the intracellular trafficking and the stability of peptide-free MHC class I OCs. In terms of processing, N-glycosylated. In terms of tissue distribution, expressed in resting B cells (at protein level). Expressed in secondary lymphoid organs rich in B and T cells such as the tonsils, spleen, and thymus (at protein level). Expressed in the endothelial cells of the tonsils. Expressed on activated lymphoid cells including B cells, NK cells, CD4+ T cells and memory T cells (at protein level). Expressed in motor neurons of spinal cord.

The protein resides in the cell membrane. It localises to the early endosome membrane. Its subcellular location is the lysosome membrane. Its function is as follows. Non-classical major histocompatibility class Ib molecule postulated to play a role in immune surveillance, immune tolerance and inflammation. Functions in two forms, as a heterotrimeric complex with B2M/beta-2 microglobulin and a peptide (peptide-bound HLA-F-B2M) and as an open conformer (OC) devoid of peptide and B2M (peptide-free OC). In complex with B2M, presents non-canonical self-peptides carrying post-translational modifications, particularly phosphorylated self-peptides. Peptide-bound HLA-F-B2M acts as a ligand for LILRB1 inhibitory receptor, a major player in maternal-fetal tolerance. Peptide-free OC acts as a ligand for KIR3DS1 and KIR3DL2 receptors. Upon interaction with activating KIR3DS1 receptor on NK cells, triggers NK cell degranulation and anti-viral cytokine production. Through interaction with KIR3DL2 receptor, inhibits NK and T cell effector functions. May interact with other MHC class I OCs to cross-present exogenous viral, tumor or minor histompatibility antigens to cytotoxic CD8+ T cells, triggering effector and memory responses. May play a role in inflammatory responses in the peripheral nervous system. Through interaction with KIR3DL2, may protect motor neurons from astrocyte-induced toxicity. The polypeptide is HLA class I histocompatibility antigen, alpha chain F (Homo sapiens (Human)).